The following is a 248-amino-acid chain: Aspartate/glutamate leucyltransferase (248 aa).

The protein belongs to the R-transferase family. Bpt subfamily.

Its subcellular location is the cytoplasm. The catalysed reaction is N-terminal L-glutamyl-[protein] + L-leucyl-tRNA(Leu) = N-terminal L-leucyl-L-glutamyl-[protein] + tRNA(Leu) + H(+). It catalyses the reaction N-terminal L-aspartyl-[protein] + L-leucyl-tRNA(Leu) = N-terminal L-leucyl-L-aspartyl-[protein] + tRNA(Leu) + H(+). In terms of biological role, functions in the N-end rule pathway of protein degradation where it conjugates Leu from its aminoacyl-tRNA to the N-termini of proteins containing an N-terminal aspartate or glutamate. This chain is Aspartate/glutamate leucyltransferase, found in Methylobacillus flagellatus (strain ATCC 51484 / DSM 6875 / VKM B-1610 / KT).